The chain runs to 748 residues: Structure-specific endonuclease subunit SLX4 (748 aa).

A compositionally biased stretch (polar residues) spans 62 to 75 (KSVTAQKSPMTQET). Residues 62–104 (KSVTAQKSPMTQETTKNDTERNKDVDKSCNPVSTSHPDLGGSN) form a disordered region. Phosphothreonine; by ATR and ATM is present on T72. Basic and acidic residues predominate over residues 76–88 (TKNDTERNKDVDK). At T113 the chain carries Phosphothreonine; by ATR and ATM. Disordered stretches follow at residues 215 to 236 (IKTQ…KGEK) and 277 to 303 (EKSS…PPEL). A compositionally biased stretch (basic and acidic residues) spans 222-236 (NSDKPPRARNNKGEK). The span at 277–298 (EKSSNSLDNQESSQQRLWTASQ) shows a compositional bias: polar residues. Position 289 is a phosphoserine; by ATR and ATM (S289). T319 is modified (phosphothreonine; by ATR and ATM). S329 and S355 each carry phosphoserine; by ATR and ATM. The span at 591 to 602 (ISTKDSTQNPTT) shows a compositional bias: polar residues. A disordered region spans residues 591–610 (ISTKDSTQNPTTSNDIIDTS).

This sequence belongs to the SLX4 family. Forms a heterodimer with SLX1. Interacts with RAD1; catalytic subunit of the RAD1-RAD10 endonuclease. Interacts with RTT107. In terms of processing, phosphorylated by ATR (MEC1) and ATM (TEL1) upon DNA damage. This appears to be required for the function with the RAD1-RAD10 endonuclease.

It is found in the nucleus. It localises to the cytoplasm. Regulatory subunit that interacts with and increases the activity of different structure-specific endonucleases. Has several distinct roles in protecting genome stability by resolving diverse forms of deleterious DNA structures. Component of the SLX1-SLX4 structure-specific endonuclease that resolves DNA secondary structures generated during DNA repair and recombination. Has endonuclease activity towards branched DNA substrates, introducing single-strand cuts in duplex DNA close to junctions with ss-DNA. Has a preference for simple Y, 5'-flap and replication fork-like structures. It cleaves the strand bearing the 5'-non-homologous arm at the branch site junction and generates ligatable, nicked products from the 5'-flap or replication fork substrates. Plays a critical role in maintaining the integrity of the ribosomal DNA (rDNA) loci, where it has a role in re-starting stalled replication forks. Has Holliday junction resolvase activity in vitro. Interacts with the structure-specific RAD1-RAD10 endonuclease and promotes RAD1-RAD10-dependent 3'-non-homologous tail removal (NHTR) during repair of double-strand breaks by single-strand annealing. SLX4 also promotes recovery from DNA-alkylation-induced replisome stalling during DNA replication by facilitating the error-free mode of lesion bypass. This does not require SLX1 or RAD1-RAD10, but probably RTT107. The chain is Structure-specific endonuclease subunit SLX4 from Saccharomyces cerevisiae (strain RM11-1a) (Baker's yeast).